The chain runs to 401 residues: Imidazolonepropionase (401 aa).

Residues His-66 and His-68 each contribute to the Fe(3+) site. Residues His-66 and His-68 each contribute to the Zn(2+) site. 4-imidazolone-5-propanoate-binding residues include Arg-75, Tyr-138, and His-171. Tyr-138 contacts N-formimidoyl-L-glutamate. A Fe(3+)-binding site is contributed by His-236. His-236 provides a ligand contact to Zn(2+). Gln-239 serves as a coordination point for 4-imidazolone-5-propanoate. Residue Asp-311 coordinates Fe(3+). Asp-311 is a binding site for Zn(2+). N-formimidoyl-L-glutamate-binding residues include Asn-313 and Gly-315. Thr-316 is a 4-imidazolone-5-propanoate binding site.

Belongs to the metallo-dependent hydrolases superfamily. HutI family. Zn(2+) is required as a cofactor. The cofactor is Fe(3+).

Its subcellular location is the cytoplasm. It catalyses the reaction 4-imidazolone-5-propanoate + H2O = N-formimidoyl-L-glutamate. The protein operates within amino-acid degradation; L-histidine degradation into L-glutamate; N-formimidoyl-L-glutamate from L-histidine: step 3/3. In terms of biological role, catalyzes the hydrolytic cleavage of the carbon-nitrogen bond in imidazolone-5-propanoate to yield N-formimidoyl-L-glutamate. It is the third step in the universal histidine degradation pathway. This Acinetobacter baumannii (strain AB307-0294) protein is Imidazolonepropionase.